A 144-amino-acid chain; its full sequence is Large ribosomal subunit protein uL15 (144 aa).

The disordered stretch occupies residues 1–44 (MNLNELQPAAGSRKLRNRVGRGTSSGNGKTSGRGQKGQKARGKV). The segment covering 23 to 35 (TSSGNGKTSGRGQ) has biased composition (gly residues).

It belongs to the universal ribosomal protein uL15 family. As to quaternary structure, part of the 50S ribosomal subunit.

Binds to the 23S rRNA. The sequence is that of Large ribosomal subunit protein uL15 from Leuconostoc citreum (strain KM20).